A 259-amino-acid polypeptide reads, in one-letter code: tRNA (guanine-N(7)-)-methyltransferase (259 aa).

Residues Gly-80, 103-104 (EL), 136-137 (NS), and Leu-156 each bind S-adenosyl-L-methionine. Asp-159 is an active-site residue. Position 234–236 (234–236 (TEE)) interacts with S-adenosyl-L-methionine.

The protein belongs to the class I-like SAM-binding methyltransferase superfamily. TrmB family.

It localises to the nucleus. The enzyme catalyses guanosine(46) in tRNA + S-adenosyl-L-methionine = N(7)-methylguanosine(46) in tRNA + S-adenosyl-L-homocysteine. It functions in the pathway tRNA modification; N(7)-methylguanine-tRNA biosynthesis. In terms of biological role, catalyzes the formation of N(7)-methylguanine at position 46 (m7G46) in tRNA. This Oryza sativa subsp. indica (Rice) protein is tRNA (guanine-N(7)-)-methyltransferase.